The following is a 425-amino-acid chain: L-cysteine:1D-myo-inositol 2-amino-2-deoxy-alpha-D-glucopyranoside ligase (425 aa).

Position 43 (C43) interacts with Zn(2+). Residues 43 to 46 (CGIT), T58, and 81 to 83 (NVT) each bind L-cysteinyl-5'-AMP. Positions 45 to 55 (ITPYDATHIGH) match the 'HIGH' region motif. A 'ERGGDP' region motif is present at residues 195 to 200 (ERGGDP). W236 lines the L-cysteinyl-5'-AMP pocket. C240 provides a ligand contact to Zn(2+). 258 to 260 (GSD) serves as a coordination point for L-cysteinyl-5'-AMP. Position 265 (H265) interacts with Zn(2+). V295 is a binding site for L-cysteinyl-5'-AMP. The 'KMSKS' region motif lies at 301–305 (KMSKS).

Belongs to the class-I aminoacyl-tRNA synthetase family. MshC subfamily. As to quaternary structure, monomer. It depends on Zn(2+) as a cofactor.

It carries out the reaction 1D-myo-inositol 2-amino-2-deoxy-alpha-D-glucopyranoside + L-cysteine + ATP = 1D-myo-inositol 2-(L-cysteinylamino)-2-deoxy-alpha-D-glucopyranoside + AMP + diphosphate + H(+). In terms of biological role, catalyzes the ATP-dependent condensation of GlcN-Ins and L-cysteine to form L-Cys-GlcN-Ins. The protein is L-cysteine:1D-myo-inositol 2-amino-2-deoxy-alpha-D-glucopyranoside ligase of Sanguibacter keddieii (strain ATCC 51767 / DSM 10542 / NCFB 3025 / ST-74).